The chain runs to 82 residues: UPF0298 protein SMU_1670c (82 aa).

Belongs to the UPF0298 family.

The protein localises to the cytoplasm. The polypeptide is UPF0298 protein SMU_1670c (Streptococcus mutans serotype c (strain ATCC 700610 / UA159)).